Here is a 901-residue protein sequence, read N- to C-terminus: DNA mismatch repair protein MutS (901 aa).

Positions 1–12 (MKYSASTSTPKS) are enriched in polar residues. Residues 1 to 25 (MKYSASTSTPKSAQPKEEELENSLP) are disordered. 679 to 686 (GPNASGKS) lines the ATP pocket.

The protein belongs to the DNA mismatch repair MutS family.

This protein is involved in the repair of mismatches in DNA. It is possible that it carries out the mismatch recognition step. This protein has a weak ATPase activity. This Trichodesmium erythraeum (strain IMS101) protein is DNA mismatch repair protein MutS.